A 140-amino-acid polypeptide reads, in one-letter code: Small ribosomal subunit protein bS16 (140 aa).

The interval 86–140 (TVGKAKQAAKREEEAKQAAKEAAEAKAAAEAEAAAAAEAAKAEDAPDGETESSEG) is disordered. Residues 94–114 (AKREEEAKQAAKEAAEAKAAA) are compositionally biased toward basic and acidic residues. Residues 115 to 124 (EAEAAAAAEA) show a composition bias toward low complexity. The span at 130–140 (APDGETESSEG) shows a compositional bias: acidic residues.

This sequence belongs to the bacterial ribosomal protein bS16 family.

The sequence is that of Small ribosomal subunit protein bS16 from Parasynechococcus marenigrum (strain WH8102).